The chain runs to 342 residues: Succinylglutamate desuccinylase (342 aa).

Zn(2+)-binding residues include histidine 63, glutamate 66, and histidine 155. Glutamate 219 is an active-site residue.

Belongs to the AspA/AstE family. Succinylglutamate desuccinylase subfamily. Zn(2+) is required as a cofactor.

It catalyses the reaction N-succinyl-L-glutamate + H2O = L-glutamate + succinate. Its pathway is amino-acid degradation; L-arginine degradation via AST pathway; L-glutamate and succinate from L-arginine: step 5/5. Transforms N(2)-succinylglutamate into succinate and glutamate. The polypeptide is Succinylglutamate desuccinylase (Vibrio campbellii (strain ATCC BAA-1116)).